A 307-amino-acid chain; its full sequence is OTU domain-containing protein 2 (307 aa).

Disordered regions lie at residues 23–46 (ENKDLQNKITGMKKQATKSKRKEV) and 96–130 (SRDEKEQQNVPVQQQQQGQTKKRRNRQKERLAKRD). Low complexity predominate over residues 103–114 (QNVPVQQQQQGQ). The OTU domain occupies 167–307 (LKQFDIQPDG…GEHYNSLHDS (141 aa)).

The chain is OTU domain-containing protein 2 (OTU2) from Saccharomyces cerevisiae (strain ATCC 204508 / S288c) (Baker's yeast).